Here is a 286-residue protein sequence, read N- to C-terminus: Diaminopimelate epimerase (286 aa).

The substrate site is built by asparagine 13 and asparagine 66. Cysteine 75 functions as the Proton donor in the catalytic mechanism. Substrate is bound by residues 76 to 77 (GN), asparagine 165, asparagine 198, and 216 to 217 (ER). Cysteine 225 serves as the catalytic Proton acceptor. 226–227 (GT) contributes to the substrate binding site.

The protein belongs to the diaminopimelate epimerase family. In terms of assembly, homodimer.

The protein resides in the cytoplasm. It catalyses the reaction (2S,6S)-2,6-diaminopimelate = meso-2,6-diaminopimelate. It participates in amino-acid biosynthesis; L-lysine biosynthesis via DAP pathway; DL-2,6-diaminopimelate from LL-2,6-diaminopimelate: step 1/1. Its function is as follows. Catalyzes the stereoinversion of LL-2,6-diaminopimelate (L,L-DAP) to meso-diaminopimelate (meso-DAP), a precursor of L-lysine and an essential component of the bacterial peptidoglycan. The polypeptide is Diaminopimelate epimerase (Oceanobacillus iheyensis (strain DSM 14371 / CIP 107618 / JCM 11309 / KCTC 3954 / HTE831)).